Reading from the N-terminus, the 387-residue chain is Alkanesulfonate monooxygenase (387 aa).

This sequence belongs to the SsuD family.

The catalysed reaction is an alkanesulfonate + FMNH2 + O2 = an aldehyde + FMN + sulfite + H2O + 2 H(+). Functionally, catalyzes the desulfonation of aliphatic sulfonates. In Cupriavidus pinatubonensis (strain JMP 134 / LMG 1197) (Cupriavidus necator (strain JMP 134)), this protein is Alkanesulfonate monooxygenase.